A 214-amino-acid chain; its full sequence is Phosphatidyl-N-methylethanolamine N-methyltransferase (214 aa).

The Lumenal segment spans residues 1–19; the sequence is MPLVALGVADLFNFVDYSK. The segment at residues 20 to 40 is an intramembrane region (helical); it reads TSLAISAAAIAFNPTFWNIVA. The Lumenal segment spans residues 41–52; the sequence is RREYRTKFLTRA. Residues 53–74 traverse the membrane as a helical segment; that stretch reads FGGNAQVACYFLAVTIFGLGLV. The Cytoplasmic segment spans residues 75–101; that stretch reads RDFLYERALRDQPSHPLLEGTYVKYAA. A helical membrane pass occupies residues 102–122; that stretch reads YALLALGNLLVITSTMRLGIT. Residue 106–108 coordinates S-adenosyl-L-methionine; sequence ALG. Topologically, residues 123-165 are lumenal; sequence GTFLGDYFGILMDGIVTGFPFNVTSAPMYYGSTMSFLGTALLY. The helical transmembrane segment at 166 to 186 threads the bilayer; the sequence is GKPAGLLLTAWVLFVYIIAIQ. Residues 187–214 are Cytoplasmic-facing; the sequence is FENPFTAEIYAKRDRERAKAAGTSKKEL. 188-189 provides a ligand contact to S-adenosyl-L-methionine; the sequence is EN.

The protein belongs to the class VI-like SAM-binding methyltransferase superfamily. PEMT/PEM2 methyltransferase family.

Its subcellular location is the endoplasmic reticulum membrane. The protein localises to the mitochondrion membrane. The catalysed reaction is a 1,2-diacyl-sn-glycero-3-phospho-N-methylethanolamine + S-adenosyl-L-methionine = a 1,2-diacyl-sn-glycero-3-phospho-N,N-dimethylethanolamine + S-adenosyl-L-homocysteine + H(+). The enzyme catalyses a 1,2-diacyl-sn-glycero-3-phospho-N,N-dimethylethanolamine + S-adenosyl-L-methionine = a 1,2-diacyl-sn-glycero-3-phosphocholine + S-adenosyl-L-homocysteine + H(+). Its pathway is phospholipid metabolism; phosphatidylcholine biosynthesis. Functionally, catalyzes the second two steps of the methylation pathway of phosphatidylcholine biosynthesis, the SAM-dependent methylation of phosphatidylmonomethylethanolamine (PMME) to phosphatidyldimethylethanolamine (PDME) and of PDME to phosphatidylcholine (PC). The chain is Phosphatidyl-N-methylethanolamine N-methyltransferase from Neurospora crassa (strain ATCC 24698 / 74-OR23-1A / CBS 708.71 / DSM 1257 / FGSC 987).